Reading from the N-terminus, the 578-residue chain is ATP-dependent RNA helicase CHR1 (578 aa).

Residues 1–95 form a disordered region; that stretch reads MDIFRILSRG…NETKAKEEEI (95 aa). 2 stretches are compositionally biased toward basic and acidic residues: residues 44-53 and 78-94; these read EVERETDFFH and NKEE…KEEE. A Q motif motif is present at residues 131–159; the sequence is DMIGRFHINKKVLSNLIDNEFVEPTPIQC. The 178-residue stretch at 162 to 339 folds into the Helicase ATP-binding domain; sequence IPITLNNRDL…HSIMKDPLRI (178 aa). 175-182 serves as a coordination point for ATP; sequence APTGSGKT. A DEAD box motif is present at residues 286-289; the sequence is DEAD. The 165-residue stretch at 350-514 folds into the Helicase C-terminal domain; sequence TIDQKLVFTG…GYSQWMEDMG (165 aa). Composition is skewed to basic and acidic residues over residues 517-531 and 561-578; these read SKKE…EIQR and ESKQ…EREE. Residues 517–578 are disordered; it reads SKKEKKQIKT…ESHSNDEREE (62 aa).

It belongs to the DEAD box helicase family. DDX52/ROK1 subfamily. In terms of assembly, interacts with the U3 snoRNA and is associated with the 90S and 40S pre-ribosomes.

The protein resides in the nucleus. Its subcellular location is the nucleolus. The catalysed reaction is ATP + H2O = ADP + phosphate + H(+). Its function is as follows. ATP-dependent RNA helicase involved in 40S ribosomal subunit biogenesis. Required for the processing and cleavage of 35S pre-rRNA at sites A0, A1, and A2, leading to mature 18S rRNA. This chain is ATP-dependent RNA helicase CHR1 (CHR1), found in Candida albicans (strain SC5314 / ATCC MYA-2876) (Yeast).